The chain runs to 563 residues: Light-independent protochlorophyllide reductase subunit B (563 aa).

D36 contacts [4Fe-4S] cluster. D293 functions as the Proton donor in the catalytic mechanism. 437-438 (GM) contacts substrate. The tract at residues 459-478 (ERREAEFGNQKVETGEPGTG) is disordered.

The protein belongs to the ChlB/BchB/BchZ family. As to quaternary structure, protochlorophyllide reductase is composed of three subunits; BchL, BchN and BchB. Forms a heterotetramer of two BchB and two BchN subunits. The cofactor is [4Fe-4S] cluster.

It carries out the reaction chlorophyllide a + oxidized 2[4Fe-4S]-[ferredoxin] + 2 ADP + 2 phosphate = protochlorophyllide a + reduced 2[4Fe-4S]-[ferredoxin] + 2 ATP + 2 H2O. It functions in the pathway porphyrin-containing compound metabolism; bacteriochlorophyll biosynthesis (light-independent). Component of the dark-operative protochlorophyllide reductase (DPOR) that uses Mg-ATP and reduced ferredoxin to reduce ring D of protochlorophyllide (Pchlide) to form chlorophyllide a (Chlide). This reaction is light-independent. The NB-protein (BchN-BchB) is the catalytic component of the complex. This Roseiflexus castenholzii (strain DSM 13941 / HLO8) protein is Light-independent protochlorophyllide reductase subunit B.